Consider the following 54-residue polypeptide: Large ribosomal subunit protein bL33 (54 aa).

Belongs to the bacterial ribosomal protein bL33 family.

In Frankia alni (strain DSM 45986 / CECT 9034 / ACN14a), this protein is Large ribosomal subunit protein bL33.